Here is a 197-residue protein sequence, read N- to C-terminus: Small ribosomal subunit protein uS4B (197 aa).

The region spanning 88 to 150 (SRLDNMVYRM…SRKTEMFVNN (63 aa)) is the S4 RNA-binding domain.

The protein belongs to the universal ribosomal protein uS4 family. As to quaternary structure, part of the 30S ribosomal subunit. Contacts protein S5. The interaction surface between S4 and S5 is involved in control of translational fidelity.

Functionally, one of the primary rRNA binding proteins, it binds directly to 16S rRNA where it nucleates assembly of the body of the 30S subunit. Its function is as follows. With S5 and S12 plays an important role in translational accuracy. The chain is Small ribosomal subunit protein uS4B (rpsD2) from Clostridium perfringens (strain 13 / Type A).